Consider the following 175-residue polypeptide: Protein SELF-PRUNING (175 aa).

This sequence belongs to the phosphatidylethanolamine-binding protein family.

It localises to the cytoplasm. Not known. In plants homozygous for the recessive allele of the SP gene, sympodial segments develop progressively fewer nodes until the shoot is terminated by two consecutive. inflorescences. In Solanum lycopersicum (Tomato), this protein is Protein SELF-PRUNING (SP).